Reading from the N-terminus, the 477-residue chain is Ribulose bisphosphate carboxylase large chain (477 aa).

Residues 1-2 constitute a propeptide that is removed on maturation; sequence MS. P3 is modified (N-acetylproline). Residue K14 is modified to N6,N6,N6-trimethyllysine. Positions 123 and 173 each coordinate substrate. Residue K175 is the Proton acceptor of the active site. K177 contacts substrate. Residues K201, D203, and E204 each contribute to the Mg(2+) site. K201 carries the N6-carboxylysine modification. The Proton acceptor role is filled by H294. Residues R295, H327, and S379 each coordinate substrate.

The protein belongs to the RuBisCO large chain family. Type I subfamily. Heterohexadecamer of 8 large chains and 8 small chains; disulfide-linked. The disulfide link is formed within the large subunit homodimers. Requires Mg(2+) as cofactor. The disulfide bond which can form in the large chain dimeric partners within the hexadecamer appears to be associated with oxidative stress and protein turnover.

The protein localises to the plastid. It is found in the chloroplast. The enzyme catalyses 2 (2R)-3-phosphoglycerate + 2 H(+) = D-ribulose 1,5-bisphosphate + CO2 + H2O. The catalysed reaction is D-ribulose 1,5-bisphosphate + O2 = 2-phosphoglycolate + (2R)-3-phosphoglycerate + 2 H(+). In terms of biological role, ruBisCO catalyzes two reactions: the carboxylation of D-ribulose 1,5-bisphosphate, the primary event in carbon dioxide fixation, as well as the oxidative fragmentation of the pentose substrate in the photorespiration process. Both reactions occur simultaneously and in competition at the same active site. This is Ribulose bisphosphate carboxylase large chain from Cichorium intybus (Chicory).